Reading from the N-terminus, the 190-residue chain is Peptidyl-prolyl cis-trans isomerase FKBP20-1 (190 aa).

Glycine 2 bears the N-acetylglycine mark. A PPIase FKBP-type domain is found at 32 to 121; the sequence is LPVVDVHYEG…IFEVELVACR (90 aa). A compositionally biased stretch (basic and acidic residues) spans 149 to 163; it reads AAAKEDDKKKREEAK. The disordered stretch occupies residues 149–190; the sequence is AAAKEDDKKKREEAKAAAAARIQAKLDAKKGPGKGKGKGKAK. Basic residues predominate over residues 179–190; that stretch reads GPGKGKGKGKAK.

It belongs to the FKBP-type PPIase family.

It catalyses the reaction [protein]-peptidylproline (omega=180) = [protein]-peptidylproline (omega=0). Its function is as follows. PPIases accelerate the folding of proteins. It catalyzes the cis-trans isomerization of proline imidic peptide bonds in oligopeptides. The polypeptide is Peptidyl-prolyl cis-trans isomerase FKBP20-1 (FKBP20-1) (Arabidopsis thaliana (Mouse-ear cress)).